The chain runs to 638 residues: 1-deoxy-D-xylulose-5-phosphate synthase (638 aa).

Thiamine diphosphate contacts are provided by residues His-79 and 120 to 122 (AHS). Mg(2+) is bound at residue Asp-151. Thiamine diphosphate is bound by residues 152–153 (GA), Asn-180, Tyr-289, and Glu-371. Residue Asn-180 coordinates Mg(2+).

The protein belongs to the transketolase family. DXPS subfamily. In terms of assembly, homodimer. It depends on Mg(2+) as a cofactor. Thiamine diphosphate serves as cofactor.

It catalyses the reaction D-glyceraldehyde 3-phosphate + pyruvate + H(+) = 1-deoxy-D-xylulose 5-phosphate + CO2. Its pathway is metabolic intermediate biosynthesis; 1-deoxy-D-xylulose 5-phosphate biosynthesis; 1-deoxy-D-xylulose 5-phosphate from D-glyceraldehyde 3-phosphate and pyruvate: step 1/1. Its function is as follows. Catalyzes the acyloin condensation reaction between C atoms 2 and 3 of pyruvate and glyceraldehyde 3-phosphate to yield 1-deoxy-D-xylulose-5-phosphate (DXP). This Rhizobium etli (strain ATCC 51251 / DSM 11541 / JCM 21823 / NBRC 15573 / CFN 42) protein is 1-deoxy-D-xylulose-5-phosphate synthase.